The primary structure comprises 1086 residues: 1,2-beta-oligoglucan phosphorylase (1086 aa).

The active-site Proton donor is aspartate 741.

This sequence belongs to the glycosyl hydrolase 94 family. In terms of assembly, monomer.

It carries out the reaction [(1-&gt;2)-beta-D-glucosyl](n) + phosphate = [(1-&gt;2)-beta-D-glucosyl](n-1) + alpha-D-glucose 1-phosphate. Catalyzes the reversible phosphorolysis of beta-(1-&gt;2)-D-glucans. The minimum length of the substrate for the phosphorolytic reaction is 3 D-glucose units. The polypeptide is 1,2-beta-oligoglucan phosphorylase (Listeria innocua serovar 6a (strain ATCC BAA-680 / CLIP 11262)).